The following is a 453-amino-acid chain: Tryptophan biosynthesis protein TrpCF (453 aa).

The indole-3-glycerol phosphate synthase stretch occupies residues 1–257 (MMQTVLAKIV…AAVRRVLLGE (257 aa)). Positions 258-453 (NKVCGLTRGQ…ASVFQTLRAY (196 aa)) are N-(5'-phosphoribosyl)anthranilate isomerase.

The protein in the N-terminal section; belongs to the TrpC family. It in the C-terminal section; belongs to the TrpF family. In terms of assembly, monomer.

It carries out the reaction N-(5-phospho-beta-D-ribosyl)anthranilate = 1-(2-carboxyphenylamino)-1-deoxy-D-ribulose 5-phosphate. The catalysed reaction is 1-(2-carboxyphenylamino)-1-deoxy-D-ribulose 5-phosphate + H(+) = (1S,2R)-1-C-(indol-3-yl)glycerol 3-phosphate + CO2 + H2O. It functions in the pathway amino-acid biosynthesis; L-tryptophan biosynthesis; L-tryptophan from chorismate: step 3/5. The protein operates within amino-acid biosynthesis; L-tryptophan biosynthesis; L-tryptophan from chorismate: step 4/5. Bifunctional enzyme that catalyzes two sequential steps of tryptophan biosynthetic pathway. The first reaction is catalyzed by the isomerase, coded by the TrpF domain; the second reaction is catalyzed by the synthase, coded by the TrpC domain. This is Tryptophan biosynthesis protein TrpCF (trpC) from Escherichia coli (strain K12).